The primary structure comprises 140 residues: Ribosome-binding factor A (140 aa).

The interval 116–140 is disordered; the sequence is RERQERGEIPPGSDDAQNCHDDEPS.

It belongs to the RbfA family. Monomer. Binds 30S ribosomal subunits, but not 50S ribosomal subunits or 70S ribosomes.

It is found in the cytoplasm. One of several proteins that assist in the late maturation steps of the functional core of the 30S ribosomal subunit. Associates with free 30S ribosomal subunits (but not with 30S subunits that are part of 70S ribosomes or polysomes). Required for efficient processing of 16S rRNA. May interact with the 5'-terminal helix region of 16S rRNA. This is Ribosome-binding factor A from Synechococcus sp. (strain WH7803).